The chain runs to 553 residues: Phosphomethylpyrimidine synthase (553 aa).

Substrate contacts are provided by residues Asn-192, Met-221, Tyr-250, His-286, 306 to 308, 347 to 350, and Glu-386; these read SRG and DGLR. Residue His-390 coordinates Zn(2+). Residue Tyr-413 coordinates substrate. Position 454 (His-454) interacts with Zn(2+). [4Fe-4S] cluster-binding residues include Cys-534, Cys-537, and Cys-542.

Belongs to the ThiC family. In terms of assembly, homodimer. The cofactor is [4Fe-4S] cluster.

The catalysed reaction is 5-amino-1-(5-phospho-beta-D-ribosyl)imidazole + S-adenosyl-L-methionine = 4-amino-2-methyl-5-(phosphooxymethyl)pyrimidine + CO + 5'-deoxyadenosine + formate + L-methionine + 3 H(+). It functions in the pathway cofactor biosynthesis; thiamine diphosphate biosynthesis. Its function is as follows. Catalyzes the synthesis of the hydroxymethylpyrimidine phosphate (HMP-P) moiety of thiamine from aminoimidazole ribotide (AIR) in a radical S-adenosyl-L-methionine (SAM)-dependent reaction. This chain is Phosphomethylpyrimidine synthase, found in Anaplasma marginale (strain St. Maries).